The primary structure comprises 740 residues: Ion-translocating oxidoreductase complex subunit C (740 aa).

2 4Fe-4S ferredoxin-type domains span residues 369-397 (GEPQ…QQLY) and 407-436 (KATT…VQYF). Residues C377, C380, C383, C387, C416, C419, C422, and C426 each coordinate [4Fe-4S] cluster. The interval 602-684 (KLEQQQANAE…EPEEQVDPRK (83 aa)) is disordered. Low complexity-rich tracts occupy residues 605-615 (QQQANAEPEQQ) and 637-647 (QQQANAEPEQQ).

The protein belongs to the 4Fe4S bacterial-type ferredoxin family. RnfC subfamily. As to quaternary structure, the complex is composed of six subunits: RsxA, RsxB, RsxC, RsxD, RsxE and RsxG. The cofactor is [4Fe-4S] cluster.

The protein localises to the cell inner membrane. Part of a membrane-bound complex that couples electron transfer with translocation of ions across the membrane. Required to maintain the reduced state of SoxR. The protein is Ion-translocating oxidoreductase complex subunit C of Escherichia coli O7:K1 (strain IAI39 / ExPEC).